We begin with the raw amino-acid sequence, 354 residues long: Guanine nucleotide-binding protein G(i) subunit alpha-3 (354 aa).

The N-myristoyl glycine moiety is linked to residue G2. The S-palmitoyl cysteine moiety is linked to residue C3. The region spanning 32 to 354 is the G-alpha domain; sequence KEVKLLLLGA…KNNLKECGLY (323 aa). The G1 motif stretch occupies residues 35–48; the sequence is KLLLLGAGESGKST. Residues G42, E43, S44, G45, K46, S47, T48, D150, S151, L175, R176, T177, R178, V179, K180, T181, V201, and G203 each contribute to the GTP site. GDP-binding residues include E43, S44, G45, K46, S47, and T48. S47 contributes to the Mg(2+) binding site. GDP is bound by residues S151, L175, R176, T177, and R178. The G2 motif stretch occupies residues 173–181; it reads DVLRTRVKT. Position 178 is an ADP-ribosylarginine; by cholera toxin (R178). A Mg(2+)-binding site is contributed by T181. Residues 196–205 form a G3 motif region; sequence FKMFDVGGQR. Q204 carries the post-translational modification Deamidated glutamine; by Photorhabdus PAU_02230. The G4 motif stretch occupies residues 265 to 272; the sequence is ILFLNKKD. GTP-binding residues include N269, K270, D272, L273, C325, A326, and T327. GDP is bound by residues N269, K270, and D272. The G5 motif stretch occupies residues 324–329; it reads TCATDT. GDP contacts are provided by C325 and A326. ADP-ribosylcysteine; by pertussis toxin is present on C351.

This sequence belongs to the G-alpha family. G(i/o/t/z) subfamily. Heterotrimeric G proteins are composed of 3 units; alpha, beta and gamma. The alpha subunit contains the guanine nucleotide binding site. GTP binding causes dissociation of the heterotrimer, liberating the individual subunits so that they can interact with downstream effector proteins. Forms a complex with CCDC88A/GIV and EGFR which leads to enhanced EGFR signaling and triggering of cell migration; ligand stimulation is required for recruitment of GNAI3 to the complex. Interacts (inactive GDP-bound form) with CCDC88A/GIV (via GBA motif); the interaction leads to activation of GNAI3. Interacts (inactive GDP-bound form) with CCDC88C/DAPLE (via GBA motif); the interaction leads to activation of GNAI3. Interacts (inactive GDP-bound form) with NUCB1 (via GBA motif) and NUCB2 (via GBA motif); the interaction leads to activation of GNAI3. Interacts (inactive GDP-bound form) with PLCD4 (via GBA motif); the interaction leads to activation of GNAI3. Interacts with INSR; the interaction is probably mediated by CCDC88A/GIV. Interacts with GPSM1. Interacts (GDP-bound form) with GPSM2 (via GoLoco domains). Does not interact with RGS2. Interacts with RGS8 and RGS10; this strongly enhances the intrinsic GTPase activity. Interacts with RGS16; this strongly enhances the intrinsic GTPase activity. Interacts with RGS12. Interacts (via active GTP- or inactive GDP-bound form) with RGS14. Interacts (via active GTP-bound form) with TRPC5 (via ANK repeats) in a homotetrameric ion channel; the interaction is direct and activates the channel activity. (Microbial infection) Deamidated at Gln-204 by Photorhabdus asymbiotica toxin PAU_02230, blocking GTP hydrolysis of heterotrimeric GNAQ or GNA11 and G-alphai (GNAI1, GNAI2 or GNAI3) proteins, thereby activating RhoA.

The protein localises to the cytoplasm. Its subcellular location is the cell membrane. The protein resides in the cytoskeleton. It is found in the microtubule organizing center. It localises to the centrosome. Functionally, heterotrimeric guanine nucleotide-binding proteins (G proteins) function as transducers downstream of G protein-coupled receptors (GPCRs) in numerous signaling cascades. The alpha chain contains the guanine nucleotide binding site and alternates between an active, GTP-bound state and an inactive, GDP-bound state. Signaling by an activated GPCR promotes GDP release and GTP binding. The alpha subunit has a low GTPase activity that converts bound GTP to GDP, thereby terminating the signal. Both GDP release and GTP hydrolysis are modulated by numerous regulatory proteins. Signaling is mediated via effector proteins, such as adenylate cyclase. Inhibits adenylate cyclase activity, leading to decreased intracellular cAMP levels. Stimulates the activity of receptor-regulated K(+) channels. The active GTP-bound form prevents the association of RGS14 with centrosomes and is required for the translocation of RGS14 from the cytoplasm to the plasma membrane. May play a role in cell division. The active GTP-bound form activates the calcium permeant TRPC5 ion channels. In Homo sapiens (Human), this protein is Guanine nucleotide-binding protein G(i) subunit alpha-3 (GNAI3).